The following is a 1069-amino-acid chain: Leucine--tRNA ligase (1069 aa).

The tract at residues 19–53 is disordered; sequence TAEHGTGAANATASPSGAVPPSGATATAGTGDEPG. The 'HIGH' region motif lies at 107-118; the sequence is PYPSGTGLHVGH. Positions 823 to 836 are enriched in basic and acidic residues; that stretch reads GRFTHHGAPVDRRS. The disordered stretch occupies residues 823–846; the sequence is GRFTHHGAPVDRRSGKMGKSLKNS. Residues 838-842 carry the 'KMSKS' region motif; sequence KMGKS. K841 serves as a coordination point for ATP.

It belongs to the class-I aminoacyl-tRNA synthetase family.

Its subcellular location is the cytoplasm. The catalysed reaction is tRNA(Leu) + L-leucine + ATP = L-leucyl-tRNA(Leu) + AMP + diphosphate. This chain is Leucine--tRNA ligase, found in Frankia alni (strain DSM 45986 / CECT 9034 / ACN14a).